The primary structure comprises 264 residues: GTP cyclohydrolase FolE2 (264 aa).

The protein belongs to the GTP cyclohydrolase IV family.

The enzyme catalyses GTP + H2O = 7,8-dihydroneopterin 3'-triphosphate + formate + H(+). It functions in the pathway cofactor biosynthesis; 7,8-dihydroneopterin triphosphate biosynthesis; 7,8-dihydroneopterin triphosphate from GTP: step 1/1. Converts GTP to 7,8-dihydroneopterin triphosphate. This Nitratidesulfovibrio vulgaris (strain ATCC 29579 / DSM 644 / CCUG 34227 / NCIMB 8303 / VKM B-1760 / Hildenborough) (Desulfovibrio vulgaris) protein is GTP cyclohydrolase FolE2.